The following is a 1059-amino-acid chain: Kinesin-like protein KIN-7K, chloroplastic (1059 aa).

Composition is skewed to low complexity over residues M1–S35 and P43–F58. A chloroplast-targeting transit peptide spans M1–T48. The interval M1–S99 is disordered. Residues F59 to S69 show a composition bias toward gly residues. The segment covering R70–P87 has biased composition (low complexity). Over residues V88–F97 the composition is skewed to pro residues. The 318-residue stretch at S114 to V431 folds into the Kinesin motor domain. G194–T201 provides a ligand contact to ATP. The stretch at A435–V518 forms a coiled coil. The tract at residues A526–P570 is disordered. Positions S546–S569 are enriched in polar residues. Coiled coils occupy residues E640 to S674, E700 to R781, and L862 to D910. Residues C1013–R1048 form an RING-type zinc finger.

The protein belongs to the TRAFAC class myosin-kinesin ATPase superfamily. Kinesin family. KIN-7 subfamily.

Its subcellular location is the plastid. The protein localises to the chloroplast. The sequence is that of Kinesin-like protein KIN-7K, chloroplastic from Oryza sativa subsp. japonica (Rice).